A 492-amino-acid polypeptide reads, in one-letter code: Regulatory protein ViaA (492 aa).

It belongs to the ViaA family. Homodimer. Interacts with RavA.

It is found in the cytoplasm. Functionally, component of the RavA-ViaA chaperone complex, which may act on the membrane to optimize the function of some of the respiratory chains. ViaA stimulates the ATPase activity of RavA. This is Regulatory protein ViaA from Pectobacterium atrosepticum (strain SCRI 1043 / ATCC BAA-672) (Erwinia carotovora subsp. atroseptica).